The sequence spans 199 residues: Probable nicotinate-nucleotide adenylyltransferase (199 aa).

This sequence belongs to the NadD family.

It carries out the reaction nicotinate beta-D-ribonucleotide + ATP + H(+) = deamido-NAD(+) + diphosphate. It participates in cofactor biosynthesis; NAD(+) biosynthesis; deamido-NAD(+) from nicotinate D-ribonucleotide: step 1/1. Catalyzes the reversible adenylation of nicotinate mononucleotide (NaMN) to nicotinic acid adenine dinucleotide (NaAD). This chain is Probable nicotinate-nucleotide adenylyltransferase, found in Chloroherpeton thalassium (strain ATCC 35110 / GB-78).